Here is a 90-residue protein sequence, read N- to C-terminus: Small ribosomal subunit protein uS17 (90 aa).

The protein belongs to the universal ribosomal protein uS17 family. Part of the 30S ribosomal subunit.

Its function is as follows. One of the primary rRNA binding proteins, it binds specifically to the 5'-end of 16S ribosomal RNA. This is Small ribosomal subunit protein uS17 from Methylobacillus flagellatus (strain ATCC 51484 / DSM 6875 / VKM B-1610 / KT).